Reading from the N-terminus, the 54-residue chain is UPF0391 membrane protein Pnap_0920 (54 aa).

2 consecutive transmembrane segments (helical) span residues 6-26 and 30-50; these read VVFLVIALIAAVFGFGGIAAG and IAKILFFLFAIMAIVSFVVSL.

This sequence belongs to the UPF0391 family.

It is found in the cell membrane. This is UPF0391 membrane protein Pnap_0920 from Polaromonas naphthalenivorans (strain CJ2).